A 360-amino-acid polypeptide reads, in one-letter code: Phospho-N-acetylmuramoyl-pentapeptide-transferase (360 aa).

A run of 10 helical transmembrane segments spans residues 26–46 (SIMA…KVIN), 73–93 (TMGG…WADL), 98–118 (VWFT…DDYW), 132–152 (WKYF…YAMG), 168–188 (VMPQ…VGTS), 199–219 (GLAI…AWAT), 236–256 (SGEL…FLWY), 263–283 (VFMG…IAVL), 288–308 (LLLL…ILQV), and 338–358 (VIVR…VTLK).

The protein belongs to the glycosyltransferase 4 family. MraY subfamily. It depends on Mg(2+) as a cofactor.

The protein resides in the cell inner membrane. It catalyses the reaction UDP-N-acetyl-alpha-D-muramoyl-L-alanyl-gamma-D-glutamyl-meso-2,6-diaminopimeloyl-D-alanyl-D-alanine + di-trans,octa-cis-undecaprenyl phosphate = di-trans,octa-cis-undecaprenyl diphospho-N-acetyl-alpha-D-muramoyl-L-alanyl-D-glutamyl-meso-2,6-diaminopimeloyl-D-alanyl-D-alanine + UMP. The protein operates within cell wall biogenesis; peptidoglycan biosynthesis. Functionally, catalyzes the initial step of the lipid cycle reactions in the biosynthesis of the cell wall peptidoglycan: transfers peptidoglycan precursor phospho-MurNAc-pentapeptide from UDP-MurNAc-pentapeptide onto the lipid carrier undecaprenyl phosphate, yielding undecaprenyl-pyrophosphoryl-MurNAc-pentapeptide, known as lipid I. The sequence is that of Phospho-N-acetylmuramoyl-pentapeptide-transferase from Haemophilus ducreyi (strain 35000HP / ATCC 700724).